A 341-amino-acid chain; its full sequence is tRNA N6-adenosine threonylcarbamoyltransferase (341 aa).

Fe cation-binding residues include histidine 114 and histidine 118. Residues 136–140, aspartate 169, glycine 182, aspartate 186, and asparagine 278 contribute to the substrate site; that span reads LVSGG. Aspartate 304 is a Fe cation binding site.

The protein belongs to the KAE1 / TsaD family. Fe(2+) serves as cofactor.

It localises to the cytoplasm. It carries out the reaction L-threonylcarbamoyladenylate + adenosine(37) in tRNA = N(6)-L-threonylcarbamoyladenosine(37) in tRNA + AMP + H(+). Required for the formation of a threonylcarbamoyl group on adenosine at position 37 (t(6)A37) in tRNAs that read codons beginning with adenine. Is involved in the transfer of the threonylcarbamoyl moiety of threonylcarbamoyl-AMP (TC-AMP) to the N6 group of A37, together with TsaE and TsaB. TsaD likely plays a direct catalytic role in this reaction. In Lactococcus lactis subsp. cremoris (strain SK11), this protein is tRNA N6-adenosine threonylcarbamoyltransferase.